Reading from the N-terminus, the 204-residue chain is Peptide deformylase (204 aa).

Residues Cys-131 and His-174 each coordinate Fe cation. Glu-175 is a catalytic residue. His-178 is a Fe cation binding site.

It belongs to the polypeptide deformylase family. Fe(2+) serves as cofactor.

The enzyme catalyses N-terminal N-formyl-L-methionyl-[peptide] + H2O = N-terminal L-methionyl-[peptide] + formate. In terms of biological role, removes the formyl group from the N-terminal Met of newly synthesized proteins. Requires at least a dipeptide for an efficient rate of reaction. N-terminal L-methionine is a prerequisite for activity but the enzyme has broad specificity at other positions. This chain is Peptide deformylase, found in Streptococcus pyogenes serotype M1.